The primary structure comprises 472 residues: 3-isopropylmalate dehydratase large subunit (472 aa).

Residues 61 to 80 (TPDHNVPTTQKERASGVEGI) are disordered. [4Fe-4S] cluster contacts are provided by C353, C414, and C417.

This sequence belongs to the aconitase/IPM isomerase family. LeuC type 1 subfamily. As to quaternary structure, heterodimer of LeuC and LeuD. The cofactor is [4Fe-4S] cluster.

The catalysed reaction is (2R,3S)-3-isopropylmalate = (2S)-2-isopropylmalate. It participates in amino-acid biosynthesis; L-leucine biosynthesis; L-leucine from 3-methyl-2-oxobutanoate: step 2/4. Catalyzes the isomerization between 2-isopropylmalate and 3-isopropylmalate, via the formation of 2-isopropylmaleate. The chain is 3-isopropylmalate dehydratase large subunit from Saccharophagus degradans (strain 2-40 / ATCC 43961 / DSM 17024).